A 349-amino-acid chain; its full sequence is Large ribosomal subunit protein uL2mz, N-terminal part (349 aa).

This sequence belongs to the universal ribosomal protein uL2 family. In terms of assembly, component of the mitochondrial ribosome large subunit.

The protein resides in the mitochondrion. This chain is Large ribosomal subunit protein uL2mz, N-terminal part, found in Arabidopsis thaliana (Mouse-ear cress).